The sequence spans 566 residues: Alpha-keto-acid decarboxylase (566 aa).

Glutamate 61 contributes to the thiamine diphosphate binding site. The segment at 396–478 is thiamine pyrophosphate binding; it reads TSFYGMADHR…VVVNNDGYTV (83 aa). Aspartate 446, asparagine 473, and glycine 475 together coordinate Mg(2+).

It belongs to the TPP enzyme family. A metal cation is required as a cofactor. It depends on thiamine diphosphate as a cofactor.

Decarboxylates branched-chain and aromatic alpha-keto acids to aldehydes. The chain is Alpha-keto-acid decarboxylase (kdc) from Mycobacterium ulcerans (strain Agy99).